A 741-amino-acid chain; its full sequence is Condensin complex subunit 2 (741 aa).

Residues 1–67 are disordered; sequence MGPPGPALPA…NDDEKERLQR (67 aa). 3 positions are modified to phosphoserine: Ser-15, Ser-25, and Ser-28. Thr-49 carries the phosphothreonine modification. Residues Ser-70, Ser-78, Ser-81, Ser-87, Ser-89, Ser-92, Ser-96, Ser-201, and Ser-233 each carry the phosphoserine modification. Residues 361-377 are compositionally biased toward acidic residues; it reads CGDFPDGSLGDDFDAND. The interval 361–383 is disordered; it reads CGDFPDGSLGDDFDANDEPDHTA. Position 432 is a phosphoserine (Ser-432). The disordered stretch occupies residues 447–467; sequence FRPRRKQDAPSQSENKKKSTK. Residue Lys-488 forms a Glycyl lysine isopeptide (Lys-Gly) (interchain with G-Cter in SUMO2) linkage. Ser-496 is subject to Phosphoserine. A phosphothreonine mark is found at Thr-598 and Thr-605. At Lys-637 the chain carries N6-acetyllysine.

It belongs to the CND2 (condensin subunit 2) family. In terms of assembly, component of the condensin complex, which contains the SMC2 and SMC4 heterodimer, and three non SMC subunits that probably regulate the complex: NCAPH/BRRN1, NCAPD2/CAPD2 and NCAPG. Phosphorylated by CDK1. Its phosphorylation, as well as that of NCAPD2 and NCAPG subunits, activates the condensin complex and is required for chromosome condensation. Widely expressed at low level. Expressed in proliferating cells.

Its subcellular location is the nucleus. The protein resides in the cytoplasm. It localises to the chromosome. Its function is as follows. Regulatory subunit of the condensin complex, a complex required for conversion of interphase chromatin into mitotic-like condense chromosomes. The condensin complex probably introduces positive supercoils into relaxed DNA in the presence of type I topoisomerases and converts nicked DNA into positive knotted forms in the presence of type II topoisomerases. Early in neurogenesis, may play an essential role to ensure accurate mitotic chromosome condensation in neuron stem cells, ultimately affecting neuron pool and cortex size. This is Condensin complex subunit 2 from Homo sapiens (Human).